The chain runs to 115 residues: Large ribosomal subunit protein uL24 (115 aa).

Belongs to the universal ribosomal protein uL24 family. In terms of assembly, part of the 50S ribosomal subunit.

One of two assembly initiator proteins, it binds directly to the 5'-end of the 23S rRNA, where it nucleates assembly of the 50S subunit. In terms of biological role, one of the proteins that surrounds the polypeptide exit tunnel on the outside of the subunit. This chain is Large ribosomal subunit protein uL24, found in Deinococcus geothermalis (strain DSM 11300 / CIP 105573 / AG-3a).